The sequence spans 150 residues: UPF0756 membrane protein ABAYE1440 (150 aa).

4 consecutive transmembrane segments (helical) span residues 1-21 (MLAQ…CGLL), 45-65 (FFPY…TIGV), 83-103 (FISF…WLGG), and 115-135 (VVAG…GVPV).

It belongs to the UPF0756 family.

Its subcellular location is the cell membrane. The chain is UPF0756 membrane protein ABAYE1440 from Acinetobacter baumannii (strain AYE).